We begin with the raw amino-acid sequence, 302 residues long: tRNA pseudouridine synthase B (302 aa).

Residue Asp45 is the Nucleophile of the active site.

This sequence belongs to the pseudouridine synthase TruB family. Type 1 subfamily.

It catalyses the reaction uridine(55) in tRNA = pseudouridine(55) in tRNA. In terms of biological role, responsible for synthesis of pseudouridine from uracil-55 in the psi GC loop of transfer RNAs. The polypeptide is tRNA pseudouridine synthase B (Francisella tularensis subsp. tularensis (strain FSC 198)).